Consider the following 77-residue polypeptide: MPGYTEYVLAEGSFSYGQAVAVITAYRNVFIQDDPGMHFRRVIRNAEGQRRWRCRNSEADAGKQLNAWLASGGLLRQ.

Belongs to the UPF0401 family.

In Escherichia coli O6:H1 (strain CFT073 / ATCC 700928 / UPEC), this protein is UPF0401 protein c3666.